The sequence spans 495 residues: Muscle LIM protein Mlp84B (495 aa).

One can recognise an LIM zinc-binding 1 domain in the interval cysteine 12–cysteine 63. The short motif at arginine 66–lysine 71 is the Nuclear localization signal element. The LIM zinc-binding 2 domain maps to cysteine 120–cysteine 172. A Nuclear localization signal motif is present at residues lysine 175–lysine 180. LIM zinc-binding domains follow at residues cysteine 222–cysteine 274, cysteine 325–cysteine 377, and cysteine 421–cysteine 473.

In the embryo, expression is restricted to the somatic, visceral, and pharyngeal muscles. Within the somatic musculature, expression is localized at the ends of muscles fibers at the point of attachment to the epidermis (at protein level). There is no expression in cardiac mesoderm or in fat body.

It localises to the cytoplasm. It is found in the nucleus. In terms of biological role, plays a role in cell differentiation late in myogenesis. Transcription factor Mef2 is essential for expression. This Drosophila melanogaster (Fruit fly) protein is Muscle LIM protein Mlp84B.